An 820-amino-acid polypeptide reads, in one-letter code: Phenylalanine--tRNA ligase beta subunit (820 aa).

Positions 42 to 154 (KGGLEGLVIG…EDAVPGTLAK (113 aa)) constitute a tRNA-binding domain. Residues 413-489 (AQDFIVELTY…RIYGYNNVEI (77 aa)) enclose the B5 domain. Mg(2+)-binding residues include D467, D473, E476, and D477. The FDX-ACB domain maps to 727–820 (SKFPAVKRDL…LEDKLGAKLR (94 aa)).

This sequence belongs to the phenylalanyl-tRNA synthetase beta subunit family. Type 1 subfamily. As to quaternary structure, tetramer of two alpha and two beta subunits. Mg(2+) is required as a cofactor.

It localises to the cytoplasm. It catalyses the reaction tRNA(Phe) + L-phenylalanine + ATP = L-phenylalanyl-tRNA(Phe) + AMP + diphosphate + H(+). The sequence is that of Phenylalanine--tRNA ligase beta subunit from Bacteroides fragilis (strain ATCC 25285 / DSM 2151 / CCUG 4856 / JCM 11019 / LMG 10263 / NCTC 9343 / Onslow / VPI 2553 / EN-2).